Here is a 313-residue protein sequence, read N- to C-terminus: Protoheme IX farnesyltransferase (313 aa).

8 consecutive transmembrane segments (helical) span residues 23 to 43, 56 to 76, 107 to 127, 128 to 148, 155 to 175, 182 to 202, 243 to 263, and 291 to 311; these read ILAY…VTTI, PLLI…ANTL, LIFG…TANL, LSGL…TLVL, NVVW…SAVT, ALVM…ALAM, LALA…VWFL, and YLAV…PTLF.

This sequence belongs to the UbiA prenyltransferase family. Protoheme IX farnesyltransferase subfamily.

The protein localises to the cell membrane. It catalyses the reaction heme b + (2E,6E)-farnesyl diphosphate + H2O = Fe(II)-heme o + diphosphate. The protein operates within porphyrin-containing compound metabolism; heme O biosynthesis; heme O from protoheme: step 1/1. In terms of biological role, converts heme B (protoheme IX) to heme O by substitution of the vinyl group on carbon 2 of heme B porphyrin ring with a hydroxyethyl farnesyl side group. The protein is Protoheme IX farnesyltransferase of Mycobacteroides abscessus (strain ATCC 19977 / DSM 44196 / CCUG 20993 / CIP 104536 / JCM 13569 / NCTC 13031 / TMC 1543 / L948) (Mycobacterium abscessus).